Consider the following 146-residue polypeptide: Snaclec 5 (146 aa).

Residues 1-23 (MGRFIFISFGLLVVFLSLSGTEA) form the signal peptide. 3 disulfides stabilise this stretch: cysteine 25-cysteine 36, cysteine 53-cysteine 142, and cysteine 119-cysteine 134. The region spanning 32-143 (YEGHCYRVFD…CRNYGHFVCK (112 aa)) is the C-type lectin domain.

It belongs to the snaclec family. In terms of assembly, heterodimer; disulfide-linked. In terms of tissue distribution, expressed by the venom gland.

The protein localises to the secreted. In terms of biological role, interferes with one step of hemostasis (modulation of platelet aggregation, or coagulation cascade, for example). This is Snaclec 5 from Echis pyramidum leakeyi (Leakey's carpet viper).